The sequence spans 392 residues: Nicotinate phosphoribosyltransferase (392 aa).

His216 carries the post-translational modification Phosphohistidine; by autocatalysis.

It belongs to the NAPRTase family. Post-translationally, transiently phosphorylated on a His residue during the reaction cycle. Phosphorylation strongly increases the affinity for substrates and increases the rate of nicotinate D-ribonucleotide production. Dephosphorylation regenerates the low-affinity form of the enzyme, leading to product release.

It carries out the reaction nicotinate + 5-phospho-alpha-D-ribose 1-diphosphate + ATP + H2O = nicotinate beta-D-ribonucleotide + ADP + phosphate + diphosphate. Its pathway is cofactor biosynthesis; NAD(+) biosynthesis; nicotinate D-ribonucleotide from nicotinate: step 1/1. Functionally, catalyzes the synthesis of beta-nicotinate D-ribonucleotide from nicotinate and 5-phospho-D-ribose 1-phosphate at the expense of ATP. This is Nicotinate phosphoribosyltransferase from Cupriavidus necator (strain ATCC 17699 / DSM 428 / KCTC 22496 / NCIMB 10442 / H16 / Stanier 337) (Ralstonia eutropha).